A 242-amino-acid polypeptide reads, in one-letter code: Probable transcriptional regulatory protein Csac_0964 (242 aa).

The tract at residues 1-20 (MSGHSKWANIRHKKEKTDAQ) is disordered.

It belongs to the TACO1 family.

The protein localises to the cytoplasm. The polypeptide is Probable transcriptional regulatory protein Csac_0964 (Caldicellulosiruptor saccharolyticus (strain ATCC 43494 / DSM 8903 / Tp8T 6331)).